The sequence spans 365 residues: MNLAAMDPNTYDAQLEEKRIKLENIFTDFDTPNLEVFSSEQAHYRMRAEFRIWHDGEDMYYYMFDKALNSKVRCDQFLPASKLINEMMPALIAELKPNPLLRHRLFQIDFLSTLSGEILVSLLYHKQLDEQWETEAKSLKERLASKFNVNIIGRARKQKLIFDKDFVVESLQVNGEQLQYHQIENSFTQPNGKVSVKMLEWAIDVTKNSSGDLLELYCGNGNFSIALAQNFDRVLATELAKPSVESAQYNIKINKIDNLQIIRMSAEDFTDAMAKKRSFRRLEGIDLDSYNCNTIFVDPPRAGMDPDTVKLVQGYERIVYISCNPNTLIDNLVELSKTHKITRFALFDQFPYTDHMESGVFLERK.

Positions 189, 217, 222, 238, and 298 each coordinate S-adenosyl-L-methionine. Cys-323 acts as the Nucleophile in catalysis. The Proton acceptor role is filled by Glu-357.

The protein belongs to the class I-like SAM-binding methyltransferase superfamily. RNA M5U methyltransferase family. TrmA subfamily.

It catalyses the reaction uridine(54) in tRNA + S-adenosyl-L-methionine = 5-methyluridine(54) in tRNA + S-adenosyl-L-homocysteine + H(+). It carries out the reaction uridine(341) in tmRNA + S-adenosyl-L-methionine = 5-methyluridine(341) in tmRNA + S-adenosyl-L-homocysteine + H(+). Functionally, dual-specificity methyltransferase that catalyzes the formation of 5-methyluridine at position 54 (m5U54) in all tRNAs, and that of position 341 (m5U341) in tmRNA (transfer-mRNA). In Shewanella woodyi (strain ATCC 51908 / MS32), this protein is tRNA/tmRNA (uracil-C(5))-methyltransferase.